We begin with the raw amino-acid sequence, 323 residues long: Queuosine 5'-phosphate N-glycosylase/hydrolase (323 aa).

Asn-72, Tyr-93, Lys-199, Phe-229, Asp-231, Asp-298, Trp-302, and Gln-306 together coordinate queuosine 5'-phosphate. Asp-231 (nucleophile or transition state stabilizer) is an active-site residue.

It belongs to the QNG1 protein family. In terms of assembly, monomer.

The catalysed reaction is queuosine 5'-phosphate + H2O = queuine + D-ribose 5-phosphate. Its function is as follows. Catalyzes the hydrolysis of queuosine 5'-phosphate, releasing the nucleobase queuine (q). Is likely required for salvage of queuine from exogenous queuosine (Q) that is imported and then converted to queuosine 5'-phosphate intracellularly. In vitro, can also catalyze the release of the q base directly from Q as substrate; however, Q may not be the biologically relevant substrate. Shows a very low activity on queuosine 3',5'-diphosphate, and cannot release q from queuosine 3'-phosphate and from the 5'-nucleotides AMP, UMP, CMP or GMP, indicating specificity for the queuine base. In Sphaerobacter thermophilus (strain ATCC 49802 / DSM 20745 / KCCM 41009 / NCIMB 13125 / S 6022), this protein is Queuosine 5'-phosphate N-glycosylase/hydrolase.